Consider the following 119-residue polypeptide: Ribosome-binding factor A (119 aa).

The protein belongs to the RbfA family. Monomer. Binds 30S ribosomal subunits, but not 50S ribosomal subunits or 70S ribosomes.

The protein resides in the cytoplasm. In terms of biological role, one of several proteins that assist in the late maturation steps of the functional core of the 30S ribosomal subunit. Associates with free 30S ribosomal subunits (but not with 30S subunits that are part of 70S ribosomes or polysomes). Required for efficient processing of 16S rRNA. May interact with the 5'-terminal helix region of 16S rRNA. This chain is Ribosome-binding factor A, found in Buchnera aphidicola subsp. Acyrthosiphon pisum (strain Tuc7).